Reading from the N-terminus, the 301-residue chain is GTPase IMAP family member 3 (301 aa).

Residues 1–279 (METLQNVVTG…GKKLEVLHSD (279 aa)) lie on the Cytoplasmic side of the membrane. The AIG1-type G domain maps to 20–223 (SRPLRILLVG…HSNDLFLHAE (204 aa)). Residues 29–37 (GKSGCGKSA), S50, 147–149 (RKE), and N184 each bind GTP. The required for targeting to the endoplasmic reticulum stretch occupies residues 263–301 (VLKVLPIGKKLEVLHSDFCWYLVLAILIFFVFFFLLFYV). The helical; Anchor for type IV membrane protein transmembrane segment at 280–300 (FCWYLVLAILIFFVFFFLLFY) threads the bilayer. V301 is a topological domain (lumenal).

The protein belongs to the TRAFAC class TrmE-Era-EngA-EngB-Septin-like GTPase superfamily. AIG1/Toc34/Toc159-like paraseptin GTPase family. IAN subfamily. Interacts with BAD, BAK1, BAX, BCL2, BCL2L1/Bcl-xL and BCL2L11/BimEL. The interaction with BAX is increased, when cells initiate apoptosis upon IL2 withdrawal. As to expression, expressed in thymus (in thymocytes), spleen (in splenocytes), lymph node and, at lower levels, in lung. Highly expressed in T lymphocytes.

It is found in the endoplasmic reticulum membrane. Its function is as follows. During thymocyte development, may support the positive selection of CD4 and CD8 T cells. May play a role in mitochondrial DNA segregation in hematopoietic tissues. Binds GTP. The sequence is that of GTPase IMAP family member 3 (Gimap3) from Mus musculus (Mouse).